Reading from the N-terminus, the 1011-residue chain is DNA-directed RNA polymerase subunit beta'' (1011 aa).

Zn(2+) contacts are provided by cysteine 216, cysteine 282, cysteine 288, and cysteine 291.

Belongs to the RNA polymerase beta' chain family. RpoC2 subfamily. In terms of assembly, in plastids the minimal PEP RNA polymerase catalytic core is composed of four subunits: alpha, beta, beta', and beta''. When a (nuclear-encoded) sigma factor is associated with the core the holoenzyme is formed, which can initiate transcription. Zn(2+) serves as cofactor.

Its subcellular location is the plastid. The protein resides in the chloroplast. The enzyme catalyses RNA(n) + a ribonucleoside 5'-triphosphate = RNA(n+1) + diphosphate. In terms of biological role, DNA-dependent RNA polymerase catalyzes the transcription of DNA into RNA using the four ribonucleoside triphosphates as substrates. The sequence is that of DNA-directed RNA polymerase subunit beta'' from Ostreococcus tauri.